The chain runs to 428 residues: Protein CANDIDATE G-PROTEIN COUPLED RECEPTOR 6 (428 aa).

The first 22 residues, 1–22 (MTILPFLAAVFVLQLLSTLTVA), serve as a signal peptide directing secretion. N-linked (GlcNAc...) asparagine glycosylation is found at asparagine 31, asparagine 89, and asparagine 157. 7 helical membrane-spanning segments follow: residues 173 to 193 (LYLVFFLCYLSFLCFWLCFCW), 202 to 222 (IHLLMTALLLVKSLTLICAAV), 238 to 258 (IVFYIFQFISVVLLFMVIVLI), 276 to 296 (LLVIVVPLQVLANIASIVIGE), 310 to 330 (IFFLADITCCCAIVFAMVWSM), 356 to 376 (FYVLVIGYLFFTRIVVVVMKM), and 385 to 405 (VSNAAEEIATLSFYCLMFYMF).

This sequence belongs to the LU7TM family.

It localises to the membrane. In terms of biological role, G-protein coupled receptor. Plays a role in plants and microbes interactions. This chain is Protein CANDIDATE G-PROTEIN COUPLED RECEPTOR 6, found in Arabidopsis thaliana (Mouse-ear cress).